A 189-amino-acid polypeptide reads, in one-letter code: dCTP deaminase, dUMP-forming (189 aa).

DCTP-binding positions include 101–106 (KSSLGR), D119, 127–129 (TLE), Q148, Y162, K170, and Q174. E129 functions as the Proton donor/acceptor in the catalytic mechanism. Residues 163-189 (GSGKLGSKYQGQRGPTPSKAYLNFPNK) are disordered.

The protein belongs to the dCTP deaminase family. Homotrimer.

The catalysed reaction is dCTP + 2 H2O = dUMP + NH4(+) + diphosphate. Its pathway is pyrimidine metabolism; dUMP biosynthesis; dUMP from dCTP: step 1/1. In terms of biological role, bifunctional enzyme that catalyzes both the deamination of dCTP to dUTP and the hydrolysis of dUTP to dUMP without releasing the toxic dUTP intermediate. This chain is dCTP deaminase, dUMP-forming, found in Corynebacterium glutamicum (strain R).